The following is a 159-amino-acid chain: Cytochrome c-type biogenesis protein CcmE (159 aa).

Residues 1–7 lie on the Cytoplasmic side of the membrane; sequence MTRKGRR. A helical; Signal-anchor for type II membrane protein membrane pass occupies residues 8–28; the sequence is LVLIGAGLGVLALAAGLILSA. Topologically, residues 29–159 are periplasmic; that stretch reads LNDTIVFFRS…AAPVQRAPGS (131 aa). 2 residues coordinate heme: histidine 121 and tyrosine 125. The tract at residues 134-159 is disordered; the sequence is LKKQGRWQEGGPAPGTAAPVQRAPGS.

It belongs to the CcmE/CycJ family.

The protein resides in the cell inner membrane. Heme chaperone required for the biogenesis of c-type cytochromes. Transiently binds heme delivered by CcmC and transfers the heme to apo-cytochromes in a process facilitated by CcmF and CcmH. This chain is Cytochrome c-type biogenesis protein CcmE, found in Xanthobacter autotrophicus (strain ATCC BAA-1158 / Py2).